A 60-amino-acid chain; its full sequence is Metallothionein A (60 aa).

The tract at residues 1–28 (MDPCDCSKSGTCNCGGSCTCTNCSCKSC) is beta. A divalent metal cation-binding residues include C4, C6, C12, C14, C18, C20, C23, C25, C28, C32, C33, C35, C36, C40, C43, C47, C49, C54, C58, and C59. An alpha region spans residues 29-60 (KKSCCPCCPSGCTKCASGCVCKGKTCDTSCCQ).

Belongs to the metallothionein superfamily. Type 1 family.

Metallothioneins have a high content of cysteine residues that bind various heavy metals. This is Metallothionein A (mta) from Chionodraco hamatus (Antarctic teleost icefish).